Consider the following 310-residue polypeptide: ADP-L-glycero-D-manno-heptose-6-epimerase (310 aa).

NADP(+)-binding positions include 10 to 11 (FI), 31 to 32 (DN), K38, K53, 75 to 79 (EGACS), and N92. Y140 functions as the Proton acceptor in the catalytic mechanism. Position 144 (K144) interacts with NADP(+). N169 serves as a coordination point for substrate. NADP(+) is bound by residues V170 and K178. Residue K178 is the Proton acceptor of the active site. Substrate contacts are provided by residues S180, H187, 201-204 (FAGS), R209, and Y272.

It belongs to the NAD(P)-dependent epimerase/dehydratase family. HldD subfamily. As to quaternary structure, homopentamer. It depends on NADP(+) as a cofactor.

The catalysed reaction is ADP-D-glycero-beta-D-manno-heptose = ADP-L-glycero-beta-D-manno-heptose. Its pathway is nucleotide-sugar biosynthesis; ADP-L-glycero-beta-D-manno-heptose biosynthesis; ADP-L-glycero-beta-D-manno-heptose from D-glycero-beta-D-manno-heptose 7-phosphate: step 4/4. In terms of biological role, catalyzes the interconversion between ADP-D-glycero-beta-D-manno-heptose and ADP-L-glycero-beta-D-manno-heptose via an epimerization at carbon 6 of the heptose. In Yersinia pseudotuberculosis serotype O:1b (strain IP 31758), this protein is ADP-L-glycero-D-manno-heptose-6-epimerase.